Reading from the N-terminus, the 215-residue chain is Adenylate kinase (215 aa).

Residue 10 to 15 (GAGKGT) participates in ATP binding. An NMP region spans residues 30–59 (STGDMLRAAIKAQTPMGKMAKEFMDAGKLV). AMP-binding positions include threonine 31, arginine 36, 57-59 (KLV), 85-88 (GFPR), and glutamine 92. The segment at 122–159 (GRRVHPASGRTYHITYNPPKVDDKDNETGDDLIQREDD) is LID. ATP contacts are provided by residues arginine 123 and 132 to 133 (TY). Arginine 156 and arginine 167 together coordinate AMP. Glutamine 201 contacts ATP.

It belongs to the adenylate kinase family. As to quaternary structure, monomer.

It is found in the cytoplasm. It catalyses the reaction AMP + ATP = 2 ADP. It functions in the pathway purine metabolism; AMP biosynthesis via salvage pathway; AMP from ADP: step 1/1. Functionally, catalyzes the reversible transfer of the terminal phosphate group between ATP and AMP. Plays an important role in cellular energy homeostasis and in adenine nucleotide metabolism. In Hydrogenovibrio crunogenus (strain DSM 25203 / XCL-2) (Thiomicrospira crunogena), this protein is Adenylate kinase.